A 210-amino-acid chain; its full sequence is Endonuclease III (210 aa).

The region spanning 108–127 is the HhH domain; that stretch reads RIELESLPGVGRKTANIILN. [4Fe-4S] cluster contacts are provided by Cys-187, Cys-194, Cys-197, and Cys-203.

The protein belongs to the Nth/MutY family. [4Fe-4S] cluster is required as a cofactor.

The enzyme catalyses 2'-deoxyribonucleotide-(2'-deoxyribose 5'-phosphate)-2'-deoxyribonucleotide-DNA = a 3'-end 2'-deoxyribonucleotide-(2,3-dehydro-2,3-deoxyribose 5'-phosphate)-DNA + a 5'-end 5'-phospho-2'-deoxyribonucleoside-DNA + H(+). Its function is as follows. DNA repair enzyme that has both DNA N-glycosylase activity and AP-lyase activity. The DNA N-glycosylase activity releases various damaged pyrimidines from DNA by cleaving the N-glycosidic bond, leaving an AP (apurinic/apyrimidinic) site. The AP-lyase activity cleaves the phosphodiester bond 3' to the AP site by a beta-elimination, leaving a 3'-terminal unsaturated sugar and a product with a terminal 5'-phosphate. The polypeptide is Endonuclease III (Buchnera aphidicola subsp. Acyrthosiphon pisum (strain APS) (Acyrthosiphon pisum symbiotic bacterium)).